The sequence spans 177 residues: Crossover junction endodeoxyribonuclease RuvC (177 aa).

Residues aspartate 8, glutamate 72, and aspartate 144 contribute to the active site. Aspartate 8, glutamate 72, and aspartate 144 together coordinate Mg(2+).

The protein belongs to the RuvC family. As to quaternary structure, homodimer which binds Holliday junction (HJ) DNA. The HJ becomes 2-fold symmetrical on binding to RuvC with unstacked arms; it has a different conformation from HJ DNA in complex with RuvA. In the full resolvosome a probable DNA-RuvA(4)-RuvB(12)-RuvC(2) complex forms which resolves the HJ. Mg(2+) serves as cofactor.

The protein resides in the cytoplasm. It catalyses the reaction Endonucleolytic cleavage at a junction such as a reciprocal single-stranded crossover between two homologous DNA duplexes (Holliday junction).. Functionally, the RuvA-RuvB-RuvC complex processes Holliday junction (HJ) DNA during genetic recombination and DNA repair. Endonuclease that resolves HJ intermediates. Cleaves cruciform DNA by making single-stranded nicks across the HJ at symmetrical positions within the homologous arms, yielding a 5'-phosphate and a 3'-hydroxyl group; requires a central core of homology in the junction. The consensus cleavage sequence is 5'-(A/T)TT(C/G)-3'. Cleavage occurs on the 3'-side of the TT dinucleotide at the point of strand exchange. HJ branch migration catalyzed by RuvA-RuvB allows RuvC to scan DNA until it finds its consensus sequence, where it cleaves and resolves the cruciform DNA. In Teredinibacter turnerae (strain ATCC 39867 / T7901), this protein is Crossover junction endodeoxyribonuclease RuvC.